Here is a 133-residue protein sequence, read N- to C-terminus: Small ribosomal subunit protein uS11 (133 aa).

Belongs to the universal ribosomal protein uS11 family. As to quaternary structure, part of the 30S ribosomal subunit. Interacts with proteins S7 and S18. Binds to IF-3.

Functionally, located on the platform of the 30S subunit, it bridges several disparate RNA helices of the 16S rRNA. Forms part of the Shine-Dalgarno cleft in the 70S ribosome. This is Small ribosomal subunit protein uS11 from Shouchella clausii (strain KSM-K16) (Alkalihalobacillus clausii).